The chain runs to 276 residues: Large ribosomal subunit protein uL2 (276 aa).

Disordered regions lie at residues 35–55 (APLH…RHQG) and 222–276 (GSVM…RRKK). A compositionally biased stretch (basic residues) spans 258 to 276 (KTRKKNKHSDKYIVRRRKK).

It belongs to the universal ribosomal protein uL2 family. In terms of assembly, part of the 50S ribosomal subunit. Forms a bridge to the 30S subunit in the 70S ribosome.

Its function is as follows. One of the primary rRNA binding proteins. Required for association of the 30S and 50S subunits to form the 70S ribosome, for tRNA binding and peptide bond formation. It has been suggested to have peptidyltransferase activity; this is somewhat controversial. Makes several contacts with the 16S rRNA in the 70S ribosome. This Shouchella clausii (strain KSM-K16) (Alkalihalobacillus clausii) protein is Large ribosomal subunit protein uL2.